A 128-amino-acid polypeptide reads, in one-letter code: Probable 4-amino-4-deoxy-L-arabinose-phosphoundecaprenol flippase subunit ArnF (128 aa).

Residues 1-5 are Cytoplasmic-facing; sequence MKGYG. The chain crosses the membrane as a helical span at residues 6–26; sequence WGIGSVVLVTVAQLILKWGMM. Topologically, residues 27-47 are periplasmic; the sequence is NTPLMSLADINGQFVFNHLPQ. Residues 48-68 form a helical membrane-spanning segment; it reads FIAVICGLAGYALSMLCWFFA. Topologically, residues 69-77 are cytoplasmic; the sequence is LRYLPLNRA. A helical transmembrane segment spans residues 78 to 98; sequence YPLLSLSYALVYLGAVSLPWF. Topologically, residues 99-101 are periplasmic; that stretch reads SES. Residues 102–122 form a helical membrane-spanning segment; it reads ATLLKTLGAGFILLGIWLINT. The Cytoplasmic segment spans residues 123–128; the sequence is KPIAKD.

It belongs to the ArnF family. Heterodimer of ArnE and ArnF.

It localises to the cell inner membrane. Its pathway is bacterial outer membrane biogenesis; lipopolysaccharide biosynthesis. In terms of biological role, translocates 4-amino-4-deoxy-L-arabinose-phosphoundecaprenol (alpha-L-Ara4N-phosphoundecaprenol) from the cytoplasmic to the periplasmic side of the inner membrane. This chain is Probable 4-amino-4-deoxy-L-arabinose-phosphoundecaprenol flippase subunit ArnF, found in Yersinia enterocolitica serotype O:8 / biotype 1B (strain NCTC 13174 / 8081).